Here is a 336-residue protein sequence, read N- to C-terminus: HTH-type transcriptional repressor PurR (336 aa).

An HTH lacI-type domain is found at Ala2–Val56. The H-T-H motif DNA-binding region spans Ile4–Asn23. Residues Ser48–Val56 mediate DNA binding. Hypoxanthine is bound by residues Tyr73, Lys188, Phe219, and Asp273.

Homodimer.

It functions in the pathway purine metabolism; purine nucleotide biosynthesis [regulation]. Is the main repressor of the genes involved in the de novo synthesis of purine nucleotides, regulating purB, purC, purEK, purF, purHD, purL, purMN and guaBA expression. PurR is allosterically activated to bind its cognate DNA by binding the purine corepressors, hypoxanthine or guanine, thereby effecting transcription repression. This is HTH-type transcriptional repressor PurR from Actinobacillus pleuropneumoniae serotype 3 (strain JL03).